Here is a 53-residue protein sequence, read N- to C-terminus: Tsetse thrombin inhibitor (53 aa).

The first 21 residues, 1–21 (MKFFTVLFFLLSIIYLIVAAP), serve as a signal peptide directing secretion.

Expressed at high levels in salivary glands and midguts of adult tsetse flies.

Its subcellular location is the secreted. Potent and specific inhibitor of human thrombin. It is also a potent inhibitor of thrombin-induced platelet aggregation. It is capable of antagonizing host hemostasis and facilitating blood feeding. The polypeptide is Tsetse thrombin inhibitor (TTI) (Glossina morsitans morsitans (Savannah tsetse fly)).